Reading from the N-terminus, the 824-residue chain is MLLAGGSPQPSFLLGSLKADCVTKPFLQRCQDLVRVIEDFPAKELHAIFPWLIETVFGSLDGSILGWNLRGLHERINPLEFHTALEFLDPSGAMMKLVYKLQAEEYKYDFPVSFLPGPVRASIQERVLPECPLYHNKIQFPASGGVSFNLALNSFEYFMFHFAFCLLKQRNYPQGLHFSTADSAYYILVDKYLKWFLPVEGNVPPPHSPNTGGTVPSPAPRSPSLSFTSYGSHTSLLKRHISHQHLVNADPAAQEIWRTETLLQVFVEIWLHHYSLEMYQKMQSPNAKLEALHNRLSVSSAPPIYPALPGSLHSYQELFQPTEEHVLVVRLLVKHLHTFSNSIRPEQVSPSTHSHTASPLEELKRVVVPRFIQQKLYIFLQHCFGHWPLDASFRAVLEMWLSYVQPWRYVLERSSPVSGEMQNRNVPEKWSTFVQENLLFYTKLFLRFLSRALRTDLVNPKNALMVFRAAKVFSQLNLPEMILNGEQLFLKPEHVIPHRQHRLLLTPNLGGSFLSSWQPPITDTSLKVKSHVFSLEGQDCQYMQMFGPEARNLVLRLAQMISQAKQTAKSISNHSPDSSANQSFLSWFGLGSPDFNGSYNGSDLDEAGYDTIRKTDEHLEKALDYFCQIFRLNPTQLGQLTANVDSSQDDDGKNKLPDCIQSEDGVVLTSLGRYQIINGLRKFDIEYQGDPELQPIRSYENAMLVRYLYRLSSVINKRFANSMGALCARKDFLGKLCRHHLTSSSRKCKKSPITSVSPSEPAAPHIRLRFLASYRTLAFLFIFYILGSLLSLGPLICTFLLLIGCMFYAIVQTLLSEEQKPHNN.

A helical membrane pass occupies residues 777–797 (LAFLFIFYILGSLLSLGPLIC).

It depends on Mg(2+) as a cofactor.

The protein resides in the endoplasmic reticulum membrane. The protein localises to the golgi apparatus membrane. Its subcellular location is the nucleus envelope. It is found in the cell membrane. It localises to the sarcolemma. The enzyme catalyses a sphingomyelin + H2O = phosphocholine + an N-acylsphing-4-enine + H(+). In terms of biological role, catalyzes the hydrolysis of membrane sphingomyelin to form phosphorylcholine and ceramide. It has a relevant role in the homeostasis of membrane sphingolipids, thereby influencing membrane integrity, and endoplasmic reticulum organization and function. May sensitize cells to DNA damage-induced apoptosis. The polypeptide is Sphingomyelin phosphodiesterase 4 (smpd4) (Xenopus laevis (African clawed frog)).